The primary structure comprises 452 residues: Serine carboxypeptidase-like 26 (452 aa).

A signal peptide spans 1-20 (MARLLLLFFFFLILLHYASC). N-linked (GlcNAc...) asparagine glycosylation is found at Asn-52 and Asn-138. Cystine bridges form between Cys-87-Cys-338, Cys-244-Cys-256, and Cys-280-Cys-306. Ser-180 is an active-site residue. Asn-327 carries N-linked (GlcNAc...) asparagine glycosylation. Active-site residues include Asp-375 and His-427.

The protein belongs to the peptidase S10 family. Ubiquitous.

Its subcellular location is the secreted. Probable carboxypeptidase. The protein is Serine carboxypeptidase-like 26 (SCPL26) of Arabidopsis thaliana (Mouse-ear cress).